Reading from the N-terminus, the 396-residue chain is S-adenosylmethionine synthase (396 aa).

His-16 contacts ATP. Asp-18 provides a ligand contact to Mg(2+). Glu-44 provides a ligand contact to K(+). L-methionine-binding residues include Glu-57 and Gln-100. The tract at residues 100–110 (QSQDIARGVDN) is flexible loop. Residues 162–164 (DGK), Asp-237, 243–244 (RK), Ala-260, and Lys-264 contribute to the ATP site. Position 237 (Asp-237) interacts with L-methionine. Lys-268 is an L-methionine binding site.

Belongs to the AdoMet synthase family. As to quaternary structure, homotetramer; dimer of dimers. Mg(2+) is required as a cofactor. Requires K(+) as cofactor.

The protein resides in the cytoplasm. The enzyme catalyses L-methionine + ATP + H2O = S-adenosyl-L-methionine + phosphate + diphosphate. It participates in amino-acid biosynthesis; S-adenosyl-L-methionine biosynthesis; S-adenosyl-L-methionine from L-methionine: step 1/1. Catalyzes the formation of S-adenosylmethionine (AdoMet) from methionine and ATP. The overall synthetic reaction is composed of two sequential steps, AdoMet formation and the subsequent tripolyphosphate hydrolysis which occurs prior to release of AdoMet from the enzyme. This Myxococcus xanthus protein is S-adenosylmethionine synthase.